A 103-amino-acid chain; its full sequence is Small ribosomal subunit protein uS14c (103 aa).

Belongs to the universal ribosomal protein uS14 family. Part of the 30S ribosomal subunit.

Its subcellular location is the plastid. It localises to the chloroplast. Binds 16S rRNA, required for the assembly of 30S particles. The chain is Small ribosomal subunit protein uS14c from Oryza nivara (Indian wild rice).